Here is a 262-residue protein sequence, read N- to C-terminus: Zinc import ATP-binding protein ZnuC (262 aa).

In terms of domain architecture, ABC transporter spans 5–220; it reads IELQDICVDF…PSYLAMFGHR (216 aa). 37 to 44 contacts ATP; that stretch reads GPNGAGKS.

The protein belongs to the ABC transporter superfamily. Zinc importer (TC 3.A.1.15.5) family. As to quaternary structure, the complex is composed of two ATP-binding proteins (ZnuC), two transmembrane proteins (ZnuB) and a solute-binding protein (ZnuA).

It localises to the cell inner membrane. The catalysed reaction is Zn(2+)(out) + ATP(in) + H2O(in) = Zn(2+)(in) + ADP(in) + phosphate(in) + H(+)(in). Part of the ABC transporter complex ZnuABC involved in zinc import. Responsible for energy coupling to the transport system. This is Zinc import ATP-binding protein ZnuC from Vibrio cholerae serotype O1 (strain ATCC 39315 / El Tor Inaba N16961).